A 339-amino-acid polypeptide reads, in one-letter code: Glycerol-3-phosphate dehydrogenase [NAD(P)+] (339 aa).

4 residues coordinate NADPH: Ser-15, Tyr-16, His-36, and Lys-110. The sn-glycerol 3-phosphate site is built by Lys-110, Gly-139, and Thr-141. Ala-143 provides a ligand contact to NADPH. Residues Lys-195, Asp-248, Ser-258, Arg-259, and Asn-260 each contribute to the sn-glycerol 3-phosphate site. Lys-195 (proton acceptor) is an active-site residue. Arg-259 is a binding site for NADPH. The NADPH site is built by Val-283 and Glu-285.

The protein belongs to the NAD-dependent glycerol-3-phosphate dehydrogenase family.

Its subcellular location is the cytoplasm. The catalysed reaction is sn-glycerol 3-phosphate + NAD(+) = dihydroxyacetone phosphate + NADH + H(+). It carries out the reaction sn-glycerol 3-phosphate + NADP(+) = dihydroxyacetone phosphate + NADPH + H(+). The protein operates within membrane lipid metabolism; glycerophospholipid metabolism. Its function is as follows. Catalyzes the reduction of the glycolytic intermediate dihydroxyacetone phosphate (DHAP) to sn-glycerol 3-phosphate (G3P), the key precursor for phospholipid synthesis. In Escherichia coli O17:K52:H18 (strain UMN026 / ExPEC), this protein is Glycerol-3-phosphate dehydrogenase [NAD(P)+].